We begin with the raw amino-acid sequence, 89 residues long: MSSYHAAYIDYELRVTESMTDTMGTDTEITLKPYQHFVASVFLGLDKMHSLLLFHDTGVGKTITTTFIIKQLKNIYTNWSILLLVKKHL.

A Helicase ATP-binding domain is found at 42–89; that stretch reads FLGLDKMHSLLLFHDTGVGKTITTTFIIKQLKNIYTNWSILLLVKKHL. Residue 55–62 participates in ATP binding; sequence HDTGVGKT.

Belongs to the helicase family. NPH I subfamily.

The catalysed reaction is a ribonucleoside 5'-triphosphate + H2O = a ribonucleoside 5'-diphosphate + phosphate + H(+). Functionally, serves two roles in transcription; it acts in concert with viral termination factor/capping enzyme to catalyze release of UUUUUNU-containing nascent RNA from the elongation complex, and it acts by itself as a polymerase elongation factor to facilitate readthrough of intrinsic pause sites. This chain is Nucleoside triphosphatase I (NPH1), found in Swinepox virus (strain Kasza) (SWPV).